The chain runs to 354 residues: Multiple sugar-binding periplasmic receptor ChvE (354 aa).

The first 25 residues, 1-25, serve as a signal peptide directing secretion; the sequence is MKSIISLTAAAAIGVAMFVAPAFAA.

Belongs to the bacterial solute-binding protein 2 family.

The protein resides in the periplasm. Its function is as follows. Required for effective transcriptional induction of the vir genes by monosaccharides in response to plant signals and for normal growth and chemotaxis towards certain sugars. Functions as a periplasmic multiple sugar-binding receptor protein. It does not interact with a transport system. This chain is Multiple sugar-binding periplasmic receptor ChvE (chvE), found in Rhizobium radiobacter (Agrobacterium tumefaciens).